Here is a 163-residue protein sequence, read N- to C-terminus: Cytochrome c-type biogenesis protein CcmE (163 aa).

Topologically, residues 1–8 (MNPRRKKR) are cytoplasmic. The helical; Signal-anchor for type II membrane protein transmembrane segment at 9-29 (LTIILAISAGLAAVIGLVLYA) threads the bilayer. The Periplasmic segment spans residues 30-163 (LSQNIDLFYT…TEAQLKGSKQ (134 aa)). The heme site is built by H131 and Y135.

This sequence belongs to the CcmE/CycJ family.

It is found in the cell inner membrane. Functionally, heme chaperone required for the biogenesis of c-type cytochromes. Transiently binds heme delivered by CcmC and transfers the heme to apo-cytochromes in a process facilitated by CcmF and CcmH. The polypeptide is Cytochrome c-type biogenesis protein CcmE (Aeromonas hydrophila subsp. hydrophila (strain ATCC 7966 / DSM 30187 / BCRC 13018 / CCUG 14551 / JCM 1027 / KCTC 2358 / NCIMB 9240 / NCTC 8049)).